The chain runs to 599 residues: Translation initiation factor IF-2 (599 aa).

Positions 111–278 (PRPPIITVMG…SILLLAEILE (168 aa)) constitute a tr-type G domain. Residues 120–127 (GHVDHGKT) are G1. A GTP-binding site is contributed by 120–127 (GHVDHGKT). Residues 145-149 (GITQH) are G2. Residues 166 to 169 (DTPG) are G3. GTP-binding positions include 166–170 (DTPGH) and 220–223 (NKMD). A G4 region spans residues 220–223 (NKMD). The tract at residues 256 to 258 (SAL) is G5.

The protein belongs to the TRAFAC class translation factor GTPase superfamily. Classic translation factor GTPase family. IF-2 subfamily.

It is found in the cytoplasm. One of the essential components for the initiation of protein synthesis. Protects formylmethionyl-tRNA from spontaneous hydrolysis and promotes its binding to the 30S ribosomal subunits. Also involved in the hydrolysis of GTP during the formation of the 70S ribosomal complex. The protein is Translation initiation factor IF-2 of Mesomycoplasma hyopneumoniae (strain 7448) (Mycoplasma hyopneumoniae).